We begin with the raw amino-acid sequence, 432 residues long: Adenylosuccinate synthetase (432 aa).

GTP-binding positions include 12-18 and 40-42; these read GDEGKGK and GHT. The Proton acceptor role is filled by aspartate 13. The Mg(2+) site is built by aspartate 13 and glycine 40. IMP is bound by residues 13-16, 38-41, threonine 130, arginine 144, glutamine 225, threonine 240, and arginine 304; these read DEGK and NAGH. Histidine 41 functions as the Proton donor in the catalytic mechanism. Residue 300-306 participates in substrate binding; sequence STTGRPR. GTP contacts are provided by residues arginine 306, 332-334, and 414-416; these read KLD and SVG.

Belongs to the adenylosuccinate synthetase family. In terms of assembly, homodimer. Requires Mg(2+) as cofactor.

It localises to the cytoplasm. It catalyses the reaction IMP + L-aspartate + GTP = N(6)-(1,2-dicarboxyethyl)-AMP + GDP + phosphate + 2 H(+). The protein operates within purine metabolism; AMP biosynthesis via de novo pathway; AMP from IMP: step 1/2. In terms of biological role, plays an important role in the de novo pathway of purine nucleotide biosynthesis. Catalyzes the first committed step in the biosynthesis of AMP from IMP. This Geobacter sp. (strain M21) protein is Adenylosuccinate synthetase.